Consider the following 269-residue polypeptide: Phosphonoacetaldehyde hydrolase (269 aa).

Aspartate 10 (nucleophile) is an active-site residue. Mg(2+) is bound by residues aspartate 10 and alanine 12. The active-site Schiff-base intermediate with substrate is the lysine 52. Aspartate 186 contacts Mg(2+).

This sequence belongs to the HAD-like hydrolase superfamily. PhnX family. As to quaternary structure, homodimer. The cofactor is Mg(2+).

It catalyses the reaction phosphonoacetaldehyde + H2O = acetaldehyde + phosphate + H(+). Involved in phosphonate degradation. The chain is Phosphonoacetaldehyde hydrolase from Salmonella heidelberg (strain SL476).